Consider the following 201-residue polypeptide: Probable chemoreceptor glutamine deamidase CheD 1 (201 aa).

It belongs to the CheD family.

It carries out the reaction L-glutaminyl-[protein] + H2O = L-glutamyl-[protein] + NH4(+). Probably deamidates glutamine residues to glutamate on methyl-accepting chemotaxis receptors (MCPs), playing an important role in chemotaxis. The sequence is that of Probable chemoreceptor glutamine deamidase CheD 1 from Geobacter sulfurreducens (strain ATCC 51573 / DSM 12127 / PCA).